The chain runs to 322 residues: tRNA dimethylallyltransferase (322 aa).

An ATP-binding site is contributed by 21-28; the sequence is GQTAVGKT. 23-28 lines the substrate pocket; that stretch reads TAVGKT. Residues 46-49 form an interaction with substrate tRNA region; the sequence is DSGC.

Belongs to the IPP transferase family. Monomer. Mg(2+) is required as a cofactor.

The catalysed reaction is adenosine(37) in tRNA + dimethylallyl diphosphate = N(6)-dimethylallyladenosine(37) in tRNA + diphosphate. Its function is as follows. Catalyzes the transfer of a dimethylallyl group onto the adenine at position 37 in tRNAs that read codons beginning with uridine, leading to the formation of N6-(dimethylallyl)adenosine (i(6)A). The protein is tRNA dimethylallyltransferase of Wigglesworthia glossinidia brevipalpis.